Reading from the N-terminus, the 942-residue chain is Homeobox transcription factor phx1 (942 aa).

4 stretches are compositionally biased toward polar residues: residues 1-19 (MRSY…NINY), 61-73 (HLQG…TNPN), 99-116 (ADNN…TNPS), and 122-135 (IVKS…SKQN). Disordered stretches follow at residues 1–54 (MRSY…MQLP), 61–80 (HLQG…PEFD), 87–172 (KQEK…KKQR), 604–651 (WANQ…STST), and 892–922 (SSSG…DVYS). Positions 142–151 (SVEKAKENVA) are enriched in basic and acidic residues. Positions 153–164 (ESGTPESGGSTS) are enriched in low complexity. The homeobox DNA-binding region spans 164–224 (SAPKSKKQRL…QNRRAKSKLI (61 aa)). 2 stretches are compositionally biased toward polar residues: residues 604-614 (WANQLPRQPDS) and 630-641 (SHDTSSEYGNKS).

It is found in the nucleus. In terms of biological role, trnascription factor that regulates the expression of the homocitrate synthase (HCS) lys4. This chain is Homeobox transcription factor phx1 (phx1), found in Schizosaccharomyces pombe (strain 972 / ATCC 24843) (Fission yeast).